Reading from the N-terminus, the 460-residue chain is Ammonium transporter Rh type B-A (460 aa).

Topologically, residues 1-10 (MTGYSTNMRI) are cytoplasmic. The chain crosses the membrane as a helical span at residues 11–31 (KLPLFCLILQFITIILFAVFV). At 32–62 (RYDHESDARGWHDELKNHSTANADNDFYFRY) the chain is on the extracellular side. An N-linked (GlcNAc...) asparagine glycan is attached at Asn48. A helical membrane pass occupies residues 63-83 (PSFQDVHVMIFIGFGFLMTFL). The Cytoplasmic portion of the chain corresponds to 84 to 87 (KRYG). The helical transmembrane segment at 88–108 (FSSVAFNFLIAAFGLQWSTLI) threads the bilayer. Topologically, residues 109–125 (QGFFHGFHDGKIHVGIE) are extracellular. A helical transmembrane segment spans residues 126–146 (SMINADFCTGAVLISFGAVLG). At 147-150 (KTSP) the chain is on the cytoplasmic side. Residues 151 to 171 (VQLIVMTLIEVTLFGINEYII) form a helical membrane-spanning segment. At 172-179 (LNIVGAKD) the chain is on the extracellular side. Residues 180 to 202 (AGGSMTIHTFGAYFGLIVSRVLY) form a helical membrane-spanning segment. Over 203–220 (RADLDKSRQREGSVYHSD) the chain is Cytoplasmic. Residues 221–241 (LFAMIGTIYLWMFWPSFNSAV) traverse the membrane as a helical segment. The Extracellular segment spans residues 242-252 (TAHGDDQHRTV). A helical transmembrane segment spans residues 253–273 (LNTYYSLAACTLATFGFSALL). At 274-283 (NGEGKLDMVH) the chain is on the cytoplasmic side. A helical transmembrane segment spans residues 284–304 (IQNAALAGGVAVGTSGEMMLT). Position 305 (Pro305) is a topological domain, extracellular. A helical membrane pass occupies residues 306–326 (FGAMIAGTLAGIVSVLGYKYL). Topologically, residues 327-347 (TPVLDSKLKIQDTCGVHNLHG) are cytoplasmic. Residues 348–368 (MPGILGAVIGAIVALFATADI) form a helical membrane-spanning segment. Over 369–394 (YGDGMDDVFPMIFDGSRTAKQQSLYQ) the chain is Extracellular. A helical transmembrane segment spans residues 395–415 (FLALLVALGFAIVGGTVVGFI). Residues 416–460 (LKLPLFGTPSDAECFEDAVYWEVPGGEGHQQLTVVVNNEDPDTQA) lie on the Cytoplasmic side of the membrane.

Belongs to the ammonium transporter (TC 2.A.49) family. Rh subfamily.

It localises to the basolateral cell membrane. The protein localises to the cytoplasmic vesicle membrane. In terms of biological role, functions as a specific ammonium transporter. In Xenopus laevis (African clawed frog), this protein is Ammonium transporter Rh type B-A (rhbg-a).